Consider the following 236-residue polypeptide: ATP synthase subunit a (236 aa).

The next 5 membrane-spanning stretches (helical) occupy residues 17-37, 75-95, 112-132, 174-194, and 208-228; these read LSDMLMITITCLIVFIIAVAA, FLTLGVTLIMYVFVANMLGLP, DATVTLTLAVMVVALTHYYGV, IYAGEILLGLLASLGTHYGVL, and FSIFVGTIQAFIFTMLTMVYM.

This sequence belongs to the ATPase A chain family. In terms of assembly, F-type ATPases have 2 components, CF(1) - the catalytic core - and CF(0) - the membrane proton channel. CF(1) has five subunits: alpha(3), beta(3), gamma(1), delta(1), epsilon(1). CF(0) has three main subunits: a(1), b(2) and c(9-12). The alpha and beta chains form an alternating ring which encloses part of the gamma chain. CF(1) is attached to CF(0) by a central stalk formed by the gamma and epsilon chains, while a peripheral stalk is formed by the delta and b chains.

It localises to the cell membrane. Its function is as follows. Key component of the proton channel; it plays a direct role in the translocation of protons across the membrane. The polypeptide is ATP synthase subunit a (Geobacillus stearothermophilus (Bacillus stearothermophilus)).